Consider the following 308-residue polypeptide: Secreted frizzled-related protein 1 (308 aa).

Residues 1 to 25 form the signal peptide; that stretch reads MGGGRWAAAGALLALAAGLLAAGSA. An FZ domain is found at 47–163; it reads TKPPQCVDIP…FPEGDVCIAM (117 aa). 5 disulfides stabilise this stretch: Cys52–Cys115, Cys62–Cys108, Cys99–Cys134, Cys123–Cys160, and Cys127–Cys151. Asn167 is a glycosylation site (N-linked (GlcNAc...) asparagine). 3 disulfide bridges follow: Cys180-Cys250, Cys183-Cys252, and Cys197-Cys300. Positions 180 to 300 constitute an NTR domain; it reads CPPCDNELKS…FMKKMKNHEC (121 aa).

Belongs to the secreted frizzled-related protein (sFRP) family. Interacts with WNT1, WNT2, WNT4, WNT8, MYOC and FRZD6. Highest levels in aortic endothelium, heart, spleen and eye. Lower levels in lung, brain and kidney. Weak expression in liver, skeletal muscle and the medial layer of the aorta. In the cortical brain, localized to neurons and small blood vessels. In the retina, localized to the inner and outer nuclear layers with high expression in the neuronal cell bodies. In the heart, restricted to myocytes. In lung, highest expression found in the epithelium of terminal bronchioles. In kidney, localized to the epithelium of collecting ducts of the medulla and, in spleen, expression restricted to the red pulp in cells associated with the sinuses.

It localises to the secreted. In terms of biological role, soluble frizzled-related proteins (sFRPS) function as modulators of Wnt signaling through direct interaction with Wnts. They have a role in regulating cell growth and differentiation in specific cell types. SFRP1 decreases intracellular beta-catenin levels. Has antiproliferative effects on vascular cells, in vitro and in vivo, and can induce, in vivo, an angiogenic response. In vascular cell cycle, delays the G1 phase and entry into the S phase. In kidney development, inhibits tubule formation and bud growth in metanephroi. Inhibits WNT1/WNT4-mediated TCF-dependent transcription. This is Secreted frizzled-related protein 1 (SFRP1) from Bos taurus (Bovine).